The sequence spans 397 residues: Acetate kinase (397 aa).

Position 8 (N8) interacts with Mg(2+). Residue K15 coordinates ATP. Position 92 (R92) interacts with substrate. The active-site Proton donor/acceptor is D149. ATP is bound by residues 209 to 213 (HLGNG), 283 to 285 (DFR), and 331 to 335 (GVGEN). E385 provides a ligand contact to Mg(2+).

The protein belongs to the acetokinase family. Homodimer. Mg(2+) is required as a cofactor. It depends on Mn(2+) as a cofactor.

Its subcellular location is the cytoplasm. It carries out the reaction acetate + ATP = acetyl phosphate + ADP. The protein operates within metabolic intermediate biosynthesis; acetyl-CoA biosynthesis; acetyl-CoA from acetate: step 1/2. In terms of biological role, catalyzes the formation of acetyl phosphate from acetate and ATP. Can also catalyze the reverse reaction. This Corynebacterium glutamicum (strain ATCC 13032 / DSM 20300 / JCM 1318 / BCRC 11384 / CCUG 27702 / LMG 3730 / NBRC 12168 / NCIMB 10025 / NRRL B-2784 / 534) protein is Acetate kinase.